The chain runs to 240 residues: UDP-2,3-diacylglucosamine hydrolase (240 aa).

Asp8, His10, Asp41, Asn79, and His114 together coordinate Mn(2+). 79 to 80 is a binding site for substrate; it reads NR. Substrate-binding residues include Asp122, Ser160, Asn164, Lys167, and His195. Mn(2+) is bound by residues His195 and His197.

The protein belongs to the LpxH family. Requires Mn(2+) as cofactor.

The protein resides in the cell inner membrane. The catalysed reaction is UDP-2-N,3-O-bis[(3R)-3-hydroxytetradecanoyl]-alpha-D-glucosamine + H2O = 2-N,3-O-bis[(3R)-3-hydroxytetradecanoyl]-alpha-D-glucosaminyl 1-phosphate + UMP + 2 H(+). The protein operates within glycolipid biosynthesis; lipid IV(A) biosynthesis; lipid IV(A) from (3R)-3-hydroxytetradecanoyl-[acyl-carrier-protein] and UDP-N-acetyl-alpha-D-glucosamine: step 4/6. Hydrolyzes the pyrophosphate bond of UDP-2,3-diacylglucosamine to yield 2,3-diacylglucosamine 1-phosphate (lipid X) and UMP by catalyzing the attack of water at the alpha-P atom. Involved in the biosynthesis of lipid A, a phosphorylated glycolipid that anchors the lipopolysaccharide to the outer membrane of the cell. The sequence is that of UDP-2,3-diacylglucosamine hydrolase from Proteus mirabilis (strain HI4320).